The primary structure comprises 122 residues: MYRLDVTNFRVWVSIGVSEQERYHKQPILVSVSLVFREEPKVCSTDEISDGICYAALVSLIEQTAANHPCALLERLAKVLLEKLEESLAQFVCKIDLRVSKERPPIPNLLSPVSFSISKEVP.

Substrate contacts are provided by residues Glu-21, Tyr-54, and 73–74; that span reads LE. The active-site Proton donor/acceptor is Lys-101.

The protein belongs to the DHNA family.

It catalyses the reaction 7,8-dihydroneopterin = 6-hydroxymethyl-7,8-dihydropterin + glycolaldehyde. Its pathway is cofactor biosynthesis; tetrahydrofolate biosynthesis; 2-amino-4-hydroxy-6-hydroxymethyl-7,8-dihydropteridine diphosphate from 7,8-dihydroneopterin triphosphate: step 3/4. Its function is as follows. Catalyzes the conversion of 7,8-dihydroneopterin to 6-hydroxymethyl-7,8-dihydropterin. This Chlamydia muridarum (strain MoPn / Nigg) protein is Probable dihydroneopterin aldolase (folB).